The chain runs to 89 residues: Cell division topological specificity factor (89 aa).

Belongs to the MinE family.

Functionally, prevents the cell division inhibition by proteins MinC and MinD at internal division sites while permitting inhibition at polar sites. This ensures cell division at the proper site by restricting the formation of a division septum at the midpoint of the long axis of the cell. The chain is Cell division topological specificity factor from Photorhabdus laumondii subsp. laumondii (strain DSM 15139 / CIP 105565 / TT01) (Photorhabdus luminescens subsp. laumondii).